Here is an 835-residue protein sequence, read N- to C-terminus: Protein bicaudal D homolog 1 (835 aa).

Residues Met1 to Ser264 adopt a coiled-coil conformation. A disordered region spans residues Glu278–Asn297. A coiled-coil region spans residues Glu320 to Tyr519. Disordered stretches follow at residues Arg545–Ser616 and Asp800–Asn835. The segment covering Gly557–Val572 has biased composition (low complexity). A compositionally biased stretch (basic and acidic residues) spans Val581–Lys590. The span at Glu591–Ile604 shows a compositional bias: low complexity. Residues Ile663–Gln803 adopt a coiled-coil conformation. The interval Ile663–Gln803 is interaction with RAB6A.

The protein belongs to the BicD family. Interacts with RAB6A. Interacts (via C-terminus) with RAB6B (GTP-bound); the interaction is direct. Interacts with CLIP-115 and KIFC2. As to expression, expressed in the brain, heart and skeletal muscle.

The protein resides in the golgi apparatus. Regulates coat complex coatomer protein I (COPI)-independent Golgi-endoplasmic reticulum transport by recruiting the dynein-dynactin motor complex. The protein is Protein bicaudal D homolog 1 (Bicd1) of Mus musculus (Mouse).